The chain runs to 470 residues: 63 kDa sperm flagellar membrane protein (470 aa).

The signal sequence occupies residues 1-25 (MFCHLHCMLVVFSLLLTLTGSFVNA). In terms of domain architecture, EGF-like 1 spans 41–80 (PPDPCASNPCTIASTHCVAAGESHTCECRPGYFETNGNCT). Disulfide bonds link cysteine 45–cysteine 57, cysteine 50–cysteine 66, and cysteine 68–cysteine 79. 3 N-linked (GlcNAc...) asparagine glycosylation sites follow: asparagine 78, asparagine 170, and asparagine 219. An SEA domain is found at 81-205 (VAQQFAGSFS…STITVSDFDE (125 aa)). An EGF-like 2; calcium-binding domain is found at 202 to 250 (DFDECASADDNDCDPNANCTNTAGSFTCECDTELYDNSPNTEEPGRVCI). 6 disulfide bridges follow: cysteine 206/cysteine 220, cysteine 214/cysteine 229, cysteine 231/cysteine 249, cysteine 253/cysteine 265, cysteine 258/cysteine 277, and cysteine 279/cysteine 291. The region spanning 249–292 (CIAPCDPGLCTRPNEICNNGGTIEDDNLCKCIEGYDYTQYGDCD) is the EGF-like 3 domain. A glycan (N-linked (GlcNAc...) asparagine) is linked at asparagine 322. Glycine 446 carries GPI-anchor amidated glycine lipidation. Residues 447–470 (SQRHLPVCGVLSLVVTTLLALMLH) constitute a propeptide, removed in mature form.

As to expression, sperm.

Its subcellular location is the cell projection. It is found in the cilium. The protein resides in the flagellum membrane. This Strongylocentrotus purpuratus (Purple sea urchin) protein is 63 kDa sperm flagellar membrane protein.